Here is a 443-residue protein sequence, read N- to C-terminus: Frizzled/smoothened-like sans CRD protein E (443 aa).

A signal peptide spans 1 to 23 (MISHIKKFINLYTIVFLLYILYS). At 24-83 (NENFFVKGQKLPPGFCPSPLIYRNTTDRQSDIDIGFQFLGETNCVQPCPSLILTENEWNK) the chain is on the extracellular side. Asparagine 47 carries N-linked (GlcNAc...) asparagine glycosylation. Residues 84–104 (VFNMSLVAGTISMFALIFLII) traverse the membrane as a helical segment. At 105–120 (TYSPLVNNIKDYTRHT) the chain is on the cytoplasmic side. The helical transmembrane segment at 121 to 141 (VGILFLFSGILIAMTTDGRQL) threads the bilayer. At 142–166 (WDIDLGFKKYCPEPGRFARQSDSKC) the chain is on the extracellular side. Residues 167–187 (LVTAIFFQFGCVTALLWWAAI) traverse the membrane as a helical segment. Topologically, residues 188-203 (SVDLWITIKKIKISKK) are cytoplasmic. Residues 204 to 224 (LFIIYTIAVNIVTIVLTFGPV) traverse the membrane as a helical segment. At 225-248 (GSKQYGYIDAAIGCWLMDLKYQVG) the chain is on the extracellular side. The chain crosses the membrane as a helical span at residues 249–269 (YFWAPVGFCLCVGCVSIVLIL). Residues 270–289 (KEIYNVSDAVKKKLLAKHLK) lie on the Cytoplasmic side of the membrane. A helical transmembrane segment spans residues 290-310 (PLMLIILMLTEFIYMFIFYSY). At 311–350 (TTSKKNHYHDIIEEYVVCLFVHAANPSVCKIGSTISPSAH) the chain is on the extracellular side. The helical transmembrane segment at 351–371 (FFFHLCIRLMGLEVLIFYGFT) threads the bilayer. The Cytoplasmic segment spans residues 372–443 (RQTRKIWMRS…SGIDDSKHDP (72 aa)). Composition is skewed to low complexity over residues 397–410 (SSSN…NKTS) and 419–432 (ESSE…QSIE). The interval 397-443 (SSSNDSKSSNNKTSGRVTGGFGESSEQSNEPEQSIELSGIDDSKHDP) is disordered.

Belongs to the G-protein coupled receptor Fz/Smo family.

The protein localises to the membrane. In Dictyostelium discoideum (Social amoeba), this protein is Frizzled/smoothened-like sans CRD protein E (fscE).